We begin with the raw amino-acid sequence, 267 residues long: Eukaryotic translation initiation factor 3 subunit K (267 aa).

The PCI domain occupies 46-233 (FDCYANLALL…EARSEVKSER (188 aa)).

It belongs to the eIF-3 subunit K family. Component of the eukaryotic translation initiation factor 3 (eIF-3) complex.

The protein resides in the cytoplasm. Its function is as follows. Component of the eukaryotic translation initiation factor 3 (eIF-3) complex, which is involved in protein synthesis of a specialized repertoire of mRNAs and, together with other initiation factors, stimulates binding of mRNA and methionyl-tRNAi to the 40S ribosome. The eIF-3 complex specifically targets and initiates translation of a subset of mRNAs involved in cell proliferation. This chain is Eukaryotic translation initiation factor 3 subunit K, found in Aspergillus niger (strain ATCC MYA-4892 / CBS 513.88 / FGSC A1513).